The following is a 376-amino-acid chain: 26S proteasome non-ATPase regulatory subunit 4 (376 aa).

The VWFA domain maps to 5-188 (STMVCVDNSE…LADALISSPI (184 aa)). A Glycyl lysine isopeptide (Lys-Gly) (interchain with G-Cter in SUMO2) cross-link involves residue lysine 122. Residues 197–262 (LGLGASDFEF…TEDSDDALLK (66 aa)) form an interaction with UBQLN1 region. In terms of domain architecture, UIM 1 spans 211 to 230 (SADPELALALRVSMEEQRQR). A compositionally biased stretch (basic and acidic residues) spans 224–237 (MEEQRQRQEEEARR). Residues 224 to 257 (MEEQRQRQEEEARRAAAASAAEAGIATPGTEDSD) form a disordered region. 2 positions are modified to phosphothreonine: threonine 250 and threonine 253. Residues serine 256 and alanine 259 each carry the phosphoserine modification. Positions 282–301 (TEEEQIAYAMQMSLQGTEFS) constitute a UIM 2 domain. The interval 355–376 (MGALASQATKDGKNDKKEEEKK) is disordered. A Phosphoserine modification is found at serine 360. The segment covering 364-376 (KDGKNDKKEEEKK) has biased composition (basic and acidic residues).

It belongs to the proteasome subunit S5A family. In terms of assembly, component of the 19S proteasome regulatory particle complex. The 26S proteasome consists of a 20S core particle (CP) and two 19S regulatory subunits (RP). The regulatory particle is made of a lid composed of 9 subunits, a base containing 6 ATPases and few additional components including PSMD4. Interacts with NUB1. Interacts with SQSTM1. Interacts with UBQLN4. Interacts with UBE3A. Interacts with UBQLN1 (via ubiquitin-like domain). Interacts with DDI2. As to expression, isoform Rpn10A is ubiquitous whereas isoform Rpn10E is mostly expressed in the embryonic brain.

Its function is as follows. Component of the 26S proteasome, a multiprotein complex involved in the ATP-dependent degradation of ubiquitinated proteins. This complex plays a key role in the maintenance of protein homeostasis by removing misfolded or damaged proteins, which could impair cellular functions, and by removing proteins whose functions are no longer required. Therefore, the proteasome participates in numerous cellular processes, including cell cycle progression, apoptosis, or DNA damage repair. PSMD4 acts as an ubiquitin receptor subunit through ubiquitin-interacting motifs and selects ubiquitin-conjugates for destruction. Displays a preferred selectivity for longer polyubiquitin chains. This Mus musculus (Mouse) protein is 26S proteasome non-ATPase regulatory subunit 4 (Psmd4).